The following is a 200-amino-acid chain: 3-isopropylmalate dehydratase small subunit (200 aa).

This sequence belongs to the LeuD family. LeuD type 1 subfamily. In terms of assembly, heterodimer of LeuC and LeuD.

The catalysed reaction is (2R,3S)-3-isopropylmalate = (2S)-2-isopropylmalate. The protein operates within amino-acid biosynthesis; L-leucine biosynthesis; L-leucine from 3-methyl-2-oxobutanoate: step 2/4. Catalyzes the isomerization between 2-isopropylmalate and 3-isopropylmalate, via the formation of 2-isopropylmaleate. The polypeptide is 3-isopropylmalate dehydratase small subunit (Serratia proteamaculans (strain 568)).